The chain runs to 454 residues: Bifunctional protein GlmU (454 aa).

Positions 1-226 (MSLDIVILAA…AMEVQGANDR (226 aa)) are pyrophosphorylase. UDP-N-acetyl-alpha-D-glucosamine contacts are provided by residues 8–11 (LAAG), lysine 22, glutamine 73, 78–79 (GT), 99–101 (YGD), glycine 136, glutamate 151, asparagine 166, and asparagine 224. Aspartate 101 contributes to the Mg(2+) binding site. Position 224 (asparagine 224) interacts with Mg(2+). A linker region spans residues 227–247 (LQLAQLERHYQSRVARRLMAQ). Positions 248–454 (GVTLRDPARF…GWQRPTKQKK (207 aa)) are N-acetyltransferase. Residues arginine 330 and lysine 348 each contribute to the UDP-N-acetyl-alpha-D-glucosamine site. The active-site Proton acceptor is histidine 360. Positions 363 and 374 each coordinate UDP-N-acetyl-alpha-D-glucosamine. Residues alanine 377, 383-384 (NY), serine 402, alanine 420, and arginine 437 each bind acetyl-CoA.

It in the N-terminal section; belongs to the N-acetylglucosamine-1-phosphate uridyltransferase family. The protein in the C-terminal section; belongs to the transferase hexapeptide repeat family. In terms of assembly, homotrimer. It depends on Mg(2+) as a cofactor.

The protein localises to the cytoplasm. The catalysed reaction is alpha-D-glucosamine 1-phosphate + acetyl-CoA = N-acetyl-alpha-D-glucosamine 1-phosphate + CoA + H(+). It carries out the reaction N-acetyl-alpha-D-glucosamine 1-phosphate + UTP + H(+) = UDP-N-acetyl-alpha-D-glucosamine + diphosphate. It participates in nucleotide-sugar biosynthesis; UDP-N-acetyl-alpha-D-glucosamine biosynthesis; N-acetyl-alpha-D-glucosamine 1-phosphate from alpha-D-glucosamine 6-phosphate (route II): step 2/2. The protein operates within nucleotide-sugar biosynthesis; UDP-N-acetyl-alpha-D-glucosamine biosynthesis; UDP-N-acetyl-alpha-D-glucosamine from N-acetyl-alpha-D-glucosamine 1-phosphate: step 1/1. Its pathway is bacterial outer membrane biogenesis; LPS lipid A biosynthesis. In terms of biological role, catalyzes the last two sequential reactions in the de novo biosynthetic pathway for UDP-N-acetylglucosamine (UDP-GlcNAc). The C-terminal domain catalyzes the transfer of acetyl group from acetyl coenzyme A to glucosamine-1-phosphate (GlcN-1-P) to produce N-acetylglucosamine-1-phosphate (GlcNAc-1-P), which is converted into UDP-GlcNAc by the transfer of uridine 5-monophosphate (from uridine 5-triphosphate), a reaction catalyzed by the N-terminal domain. In Azotobacter vinelandii (strain DJ / ATCC BAA-1303), this protein is Bifunctional protein GlmU.